Reading from the N-terminus, the 977-residue chain is 2-oxoglutarate dehydrogenase E1 component (977 aa).

Residues Val-77 to Gly-125 form the RPE1 insert domain.

It belongs to the alpha-ketoglutarate dehydrogenase family. Homodimer. Part of the 2-oxoglutarate dehydrogenase (OGDH) complex composed of E1 (2-oxoglutarate dehydrogenase), E2 (dihydrolipoamide succinyltransferase) and E3 (dihydrolipoamide dehydrogenase); the complex contains multiple copies of the three enzymatic components (E1, E2 and E3). Thiamine diphosphate serves as cofactor.

The enzyme catalyses N(6)-[(R)-lipoyl]-L-lysyl-[protein] + 2-oxoglutarate + H(+) = N(6)-[(R)-S(8)-succinyldihydrolipoyl]-L-lysyl-[protein] + CO2. E1 component of the 2-oxoglutarate dehydrogenase (OGDH) complex which catalyzes the decarboxylation of 2-oxoglutarate, the first step in the conversion of 2-oxoglutarate to succinyl-CoA and CO(2). The sequence is that of 2-oxoglutarate dehydrogenase E1 component (sucA) from Rickettsia felis (strain ATCC VR-1525 / URRWXCal2) (Rickettsia azadi).